The sequence spans 349 residues: Cdc42 effector protein 4 (349 aa).

Lys5 is subject to N6-methyllysine. Residue Ser18 is modified to Phosphoserine. The CRIB domain maps to 27–41 (ISAPLGDFRHTMHVG). Residues Ser64, Ser103, Ser107, and Ser116 each carry the phosphoserine modification. Over residues 123-132 (KEAAEKDSSK) the composition is skewed to basic and acidic residues. Disordered regions lie at residues 123 to 172 (KEAA…LLDE), 220 to 240 (QWGSEEEEEAGGYRDKEGPSS), and 278 to 349 (GWAV…EIRV). Ser136, Ser138, Ser140, Ser154, Ser165, Ser223, Ser285, and Ser288 each carry phosphoserine. Low complexity predominate over residues 280 to 308 (AVVAPSPSSARSVGSHTTRDSSSLSSYTS). Positions 311–322 (LEERSPAFRGPD) are enriched in basic and acidic residues. The span at 338–349 (FMDEEEEDEIRV) shows a compositional bias: acidic residues.

This sequence belongs to the BORG/CEP family. Interacts with CDC42 and RHOQ, in a GTP-dependent manner. Ubiquitous.

The protein resides in the endomembrane system. It localises to the cytoplasm. It is found in the cytoskeleton. In terms of biological role, probably involved in the organization of the actin cytoskeleton. May act downstream of CDC42 to induce actin filament assembly leading to cell shape changes. Induces pseudopodia formation, when overexpressed in fibroblasts. The sequence is that of Cdc42 effector protein 4 (Cdc42ep4) from Mus musculus (Mouse).